A 644-amino-acid chain; its full sequence is 3D-(3,5/4)-trihydroxycyclohexane-1,2-dione hydrolase (644 aa).

Glu65 contacts thiamine diphosphate. Residues 442–522 (SLPGDLHKVW…INILLFDNAG (81 aa)) are thiamine pyrophosphate binding. 2 residues coordinate Mg(2+): Asp493 and Asn520.

The protein belongs to the TPP enzyme family. It depends on Mg(2+) as a cofactor. Requires thiamine diphosphate as cofactor.

The enzyme catalyses 3D-3,5/4-trihydroxycyclohexane-1,2-dione + H2O = 5-deoxy-D-glucuronate + H(+). It participates in polyol metabolism; myo-inositol degradation into acetyl-CoA; acetyl-CoA from myo-inositol: step 3/7. Functionally, involved in the cleavage of the C1-C2 bond of 3D-(3,5/4)-trihydroxycyclohexane-1,2-dione (THcHDO) to yield 5-deoxy-glucuronate (5DG). The polypeptide is 3D-(3,5/4)-trihydroxycyclohexane-1,2-dione hydrolase (Clostridium tetani (strain Massachusetts / E88)).